The primary structure comprises 419 residues: L-rhamnose isomerase (419 aa).

Histidine 262, aspartate 294, and aspartate 296 together coordinate Mn(2+).

It belongs to the rhamnose isomerase family. In terms of assembly, homotetramer. It depends on Mn(2+) as a cofactor.

Its subcellular location is the cytoplasm. The catalysed reaction is L-rhamnopyranose = L-rhamnulose. The protein operates within carbohydrate degradation; L-rhamnose degradation; glycerone phosphate from L-rhamnose: step 1/3. Its function is as follows. Catalyzes the interconversion of L-rhamnose and L-rhamnulose. The chain is L-rhamnose isomerase from Escherichia coli O6:H1 (strain CFT073 / ATCC 700928 / UPEC).